A 207-amino-acid chain; its full sequence is Ribonuclease HII (207 aa).

One can recognise an RNase H type-2 domain in the interval 19 to 207 (HCIAGVDEVG…PVKKALGIEE (189 aa)). The a divalent metal cation site is built by aspartate 25, glutamate 26, and aspartate 117.

It belongs to the RNase HII family. The cofactor is Mn(2+). It depends on Mg(2+) as a cofactor.

The protein localises to the cytoplasm. The catalysed reaction is Endonucleolytic cleavage to 5'-phosphomonoester.. Its function is as follows. Endonuclease that specifically degrades the RNA of RNA-DNA hybrids. This chain is Ribonuclease HII, found in Vibrio vulnificus (strain CMCP6).